A 224-amino-acid polypeptide reads, in one-letter code: Ribosomal RNA large subunit methyltransferase E (224 aa).

Gly60, Trp62, Asp93, Asp109, and Asp137 together coordinate S-adenosyl-L-methionine. Residue Lys177 is the Proton acceptor of the active site.

This sequence belongs to the class I-like SAM-binding methyltransferase superfamily. RNA methyltransferase RlmE family.

It is found in the cytoplasm. The catalysed reaction is uridine(2552) in 23S rRNA + S-adenosyl-L-methionine = 2'-O-methyluridine(2552) in 23S rRNA + S-adenosyl-L-homocysteine + H(+). Specifically methylates the uridine in position 2552 of 23S rRNA at the 2'-O position of the ribose in the fully assembled 50S ribosomal subunit. This is Ribosomal RNA large subunit methyltransferase E from Polynucleobacter asymbioticus (strain DSM 18221 / CIP 109841 / QLW-P1DMWA-1) (Polynucleobacter necessarius subsp. asymbioticus).